The primary structure comprises 783 residues: Protein SEY1 (783 aa).

The Cytoplasmic segment spans residues 1–677 (MTSQAIQLID…KRSIVTSSTH (677 aa)). A GB1/RHD3-type G domain is found at 33–265 (GFNYHVISVF…YLLKPNYHHK (233 aa)). 43-50 (GSQSSGKS) is a binding site for GTP. Residues 449–472 (HEKKLQLRESELNALLSKIKKQLT) adopt a coiled-coil conformation. The chain crosses the membrane as a helical span at residues 678–698 (IPIWIYAVIVVLGWNEFMIVI). Residues 699–701 (RNP) lie on the Lumenal side of the membrane. A helical membrane pass occupies residues 702-722 (LFVTLALLSIVSFYFIQKFGL). The Cytoplasmic segment spans residues 723–783 (WGPVMNVVNT…SSSSGNEDSD (61 aa)).

This sequence belongs to the TRAFAC class dynamin-like GTPase superfamily. GB1/RHD3 GTPase family. RHD3 subfamily.

The protein resides in the endoplasmic reticulum membrane. In terms of biological role, cooperates with the reticulon proteins and tubule-shaping DP1 family proteins to generate and maintain the structure of the tubular endoplasmic reticulum network. Has GTPase activity, which is required for its function in ER organization. The polypeptide is Protein SEY1 (Candida glabrata (strain ATCC 2001 / BCRC 20586 / JCM 3761 / NBRC 0622 / NRRL Y-65 / CBS 138) (Yeast)).